The primary structure comprises 164 residues: HTH-type transcriptional regulator PapX (164 aa).

An HTH marR-type domain is found at 25–159 (EHLLMQLCIR…FEVISKKLLA (135 aa)).

It is found in the cytoplasm. This is HTH-type transcriptional regulator PapX (papX) from Escherichia coli.